Here is a 60-residue protein sequence, read N- to C-terminus: Mastoparan-VT6 (60 aa).

The signal sequence occupies residues 1–27 (MKNTILILFTAFIALLGFFGMSAEALA). AXPX repeat units follow at residues 27 to 30 (ADPK), 31 to 34 (ADPL), 35 to 38 (AGPN), and 41 to 44 (ADPE). Positions 28-45 (DPKADPLAGPNPDADPEA) are excised as a propeptide. At Leu59 the chain carries Leucine amide.

Belongs to the MCD family. Mastoparan subfamily. In terms of tissue distribution, expressed by the venom gland.

Its subcellular location is the secreted. In terms of biological role, the synthetic peptide shows antimicrobial activities against Gram-negative bacteria (but not against all strains tested), Gram-positive bacteria (all strains tested) and the fungi C.albicans and C.parapsilosis. Exhibits little hemolytic activity against washed human erythrocytes. The sequence is that of Mastoparan-VT6 from Vespa tropica (Greater banded hornet).